Consider the following 282-residue polypeptide: Pantothenate synthetase (282 aa).

Residue 30–37 (MGYLHEGH) coordinates ATP. His-37 functions as the Proton donor in the catalytic mechanism. Position 61 (Gln-61) interacts with (R)-pantoate. Residue Gln-61 coordinates beta-alanine. 147-150 (GQKD) lines the ATP pocket. Residue Gln-153 coordinates (R)-pantoate. ATP-binding positions include Val-176 and 184-187 (MSSR).

It belongs to the pantothenate synthetase family. In terms of assembly, homodimer.

The protein localises to the cytoplasm. It catalyses the reaction (R)-pantoate + beta-alanine + ATP = (R)-pantothenate + AMP + diphosphate + H(+). It functions in the pathway cofactor biosynthesis; (R)-pantothenate biosynthesis; (R)-pantothenate from (R)-pantoate and beta-alanine: step 1/1. Catalyzes the condensation of pantoate with beta-alanine in an ATP-dependent reaction via a pantoyl-adenylate intermediate. This Caldicellulosiruptor bescii (strain ATCC BAA-1888 / DSM 6725 / KCTC 15123 / Z-1320) (Anaerocellum thermophilum) protein is Pantothenate synthetase.